A 342-amino-acid chain; its full sequence is Nucleoid-associated protein Spea_1765 (342 aa).

The protein belongs to the YejK family.

The protein localises to the cytoplasm. It is found in the nucleoid. The chain is Nucleoid-associated protein Spea_1765 from Shewanella pealeana (strain ATCC 700345 / ANG-SQ1).